We begin with the raw amino-acid sequence, 543 residues long: Chaperonin GroEL (543 aa).

Residues 29–32 (TLGP), 86–90 (DGTTT), Gly-413, 476–478 (NAA), and Asp-492 contribute to the ATP site.

It belongs to the chaperonin (HSP60) family. As to quaternary structure, forms a cylinder of 14 subunits composed of two heptameric rings stacked back-to-back. Interacts with the co-chaperonin GroES.

It localises to the cytoplasm. The enzyme catalyses ATP + H2O + a folded polypeptide = ADP + phosphate + an unfolded polypeptide.. Together with its co-chaperonin GroES, plays an essential role in assisting protein folding. The GroEL-GroES system forms a nano-cage that allows encapsulation of the non-native substrate proteins and provides a physical environment optimized to promote and accelerate protein folding. The chain is Chaperonin GroEL from Streptococcus pyogenes serotype M5 (strain Manfredo).